The sequence spans 182 residues: Flavodoxin (182 aa).

The Flavodoxin-like domain occupies 4 to 173; the sequence is IGLFFGSDTG…RLKGWLSLIA (170 aa).

This sequence belongs to the flavodoxin family. FMN serves as cofactor.

Its function is as follows. Low-potential electron donor to a number of redox enzymes. NifF is the electron donor to nitrogenase. In Rhodobacter capsulatus (strain ATCC BAA-309 / NBRC 16581 / SB1003), this protein is Flavodoxin (nifF).